The chain runs to 372 residues: Ciliary neurotrophic factor receptor subunit alpha (372 aa).

An N-terminal signal peptide occupies residues 1-22; the sequence is MAAPVPWACCAVLAAAAAVVYA. Residues 27–104 form the Ig-like C2-type domain; the sequence is PQEAPHVQYE…WHLRHQVLLH (78 aa). Cysteines 46 and 89 form a disulfide. Asparagine 60, asparagine 70, asparagine 142, and asparagine 190 each carry an N-linked (GlcNAc...) asparagine glycan. Fibronectin type-III domains follow at residues 108-205 and 206-306; these read PPRE…VKPD and PPEN…TEEP. The WSXWS motif signature appears at 290-294; sequence WSDWS. The tract at residues 301-340 is disordered; that stretch reads PWTEEPRHLTTEAQAAETTTSTTSSLAPPPTTKICDPGEL. The span at 311-326 shows a compositional bias: low complexity; sequence TEAQAAETTTSTTSSL. Serine 342 carries the GPI-anchor amidated serine lipid modification. Positions 343–372 are cleaved as a propeptide — removed in mature form; the sequence is GGGPSAPFLVSVPITLALAAAAATASSLLI.

Belongs to the type I cytokine receptor family. Type 3 subfamily. Forms a heterotrimer with LIFR and IL6ST. Interacts with heterodimeric neurotropic cytokine composed of CLCF1/CLC and CRLF1/CLF-1. Either alone or in complex with the heterodimer CLCF1-CRLF1 interacts with SORL1; this interaction may promote internalization and lysosomal degradation. Component of a receptor complex composed of IL6ST/GP130, IL27RA/WSX1 and CNTFR which interacts with the neuroprotective peptide humanin. In terms of tissue distribution, nervous system and skeletal muscle.

The protein localises to the cell membrane. Binds to CNTF. The alpha subunit provides the receptor specificity. Receptor for heterodimeric neurotropic cytokine composed of CLCF1/CLC and CRLF1/CLF-1. Acts as a receptor for the neuroprotective peptide humanin as part of a complex with IL6ST/GP130 and IL27RA/WSX1. The protein is Ciliary neurotrophic factor receptor subunit alpha (CNTFR) of Homo sapiens (Human).